Here is a 105-residue protein sequence, read N- to C-terminus: UPF0145 protein OEOE_0637 (105 aa).

This sequence belongs to the UPF0145 family.

This is UPF0145 protein OEOE_0637 from Oenococcus oeni (strain ATCC BAA-331 / PSU-1).